Consider the following 177-residue polypeptide: R-phycoerythrin beta chain (177 aa).

Positions 50 and 61 each coordinate phycourobilin. N4-methylasparagine is present on N72. 2 residues coordinate (2R,3E)-phycoerythrobilin: C82 and C158.

Belongs to the phycobiliprotein family. In terms of assembly, heterodimer of an alpha and a beta chain. In terms of processing, contains two covalently linked phycoerythrobilin chromophores and one covalently linked phycourobilin chromophore.

It is found in the plastid. It localises to the chloroplast thylakoid membrane. Light-harvesting photosynthetic bile pigment-protein from the phycobiliprotein complex. The polypeptide is R-phycoerythrin beta chain (cpeB) (Lophosiphonia boldii (Red alga)).